The sequence spans 426 residues: Adenylosuccinate synthetase (426 aa).

GTP contacts are provided by residues 12 to 18 (GDEGKGK) and 40 to 42 (GHT). Aspartate 13 functions as the Proton acceptor in the catalytic mechanism. Mg(2+) contacts are provided by aspartate 13 and glycine 40. Residues 13-16 (DEGK), 38-41 (NAGH), threonine 131, arginine 145, glutamine 226, threonine 241, and arginine 305 each bind IMP. The active-site Proton donor is the histidine 41. 301-307 (ATTGRKR) is a binding site for substrate. Residues arginine 307, 333–335 (KLD), and 415–417 (SVG) contribute to the GTP site.

It belongs to the adenylosuccinate synthetase family. In terms of assembly, homodimer. The cofactor is Mg(2+).

The protein resides in the cytoplasm. It carries out the reaction IMP + L-aspartate + GTP = N(6)-(1,2-dicarboxyethyl)-AMP + GDP + phosphate + 2 H(+). Its pathway is purine metabolism; AMP biosynthesis via de novo pathway; AMP from IMP: step 1/2. Functionally, plays an important role in the de novo pathway of purine nucleotide biosynthesis. Catalyzes the first committed step in the biosynthesis of AMP from IMP. The polypeptide is Adenylosuccinate synthetase (Nitratidesulfovibrio vulgaris (strain DP4) (Desulfovibrio vulgaris)).